A 60-amino-acid chain; its full sequence is Protein translocase subunit SecE (60 aa).

Topologically, residues 1–31 (MFARLIRYFQEARAELARVTWPTREQVVEGT) are cytoplasmic. The helical transmembrane segment at 32–52 (QAILLFTLAFMVILGLYDTVF) threads the bilayer. At 53–60 (RFLIGLLR) the chain is on the extracellular side.

It belongs to the SecE/SEC61-gamma family. As to quaternary structure, component of the Sec protein translocase complex. Heterotrimer consisting of SecY, SecE and SecG subunits. The heterotrimers can form oligomers, although 1 heterotrimer is thought to be able to translocate proteins. Interacts with SecDF, and other proteins may be involved. The channel interacts with SecA via subunit SecY.

It localises to the cell inner membrane. Essential subunit of the protein translocation channel SecYEG. Clamps together the 2 halves of SecY. May contact the channel plug during translocation. The sequence is that of Protein translocase subunit SecE from Thermus thermophilus (strain ATCC 27634 / DSM 579 / HB8).